The primary structure comprises 804 residues: Endoplasmin (804 aa).

The N-terminal stretch at Met1–Ala21 is a signal peptide. The short motif at Ser42–Thr44 is the SRT pseudosubstrate motif element. N-linked (GlcNAc...) asparagine glycosylation is present at Asn62. Position 64 is a phosphoserine (Ser64). An N-linked (GlcNAc...) asparagine glycan is attached at Asn107. Residues Asn107, Asp149, and Asn162 each contribute to the ATP site. An N6-(2-hydroxyisobutyryl)lysine modification is found at Lys168. The residue at position 172 (Ser172) is a Phosphoserine. Phe199 lines the ATP pocket. N-linked (GlcNAc...) asparagine glycosylation occurs at Asn217. Residues Thr288–Thr323 are disordered. Residues Val289 to Glu317 show a composition bias toward acidic residues. Phosphoserine is present on residues Ser306 and Ser403. N6-succinyllysine is present on Lys404. A glycan (N-linked (GlcNAc...) asparagine) is linked at Asn445. At Ser447 the chain carries Phosphoserine. Lys479 is modified (N6-acetyllysine). N-linked (GlcNAc...) asparagine glycosylation is found at Asn481 and Asn502. Lys633 carries the N6-succinyllysine modification. The segment at Asp750–Leu804 is disordered. Residues Glu757 to Thr793 are compositionally biased toward acidic residues. Positions Lys801–Leu804 match the Prevents secretion from ER motif.

Belongs to the heat shock protein 90 family. Homodimer; disulfide-linked. Component of an EIF2 complex at least composed of CELF1/CUGBP1, CALR, CALR3, EIF2S1, EIF2S2, HSP90B1 and HSPA5. Part of a large chaperone multiprotein complex comprising DNAJB11, HSP90B1, HSPA5, HYOU, PDIA2, PDIA4, PDIA6, PPIB, SDF2L1, UGGT1 and very small amounts of ERP29, but not, or at very low levels, CALR nor CANX. Interacts with AIMP1; regulates its retention in the endoplasmic reticulum. Hyperglycosylated form interacts with OS9; promoting its degradation by the endoplasmic reticulum associated degradation (ERAD). Interacts with CNPY3. This interaction is disrupted in the presence of ATP. Interacts with TLR4 and TLR9, but not with TLR3. Interacts with MZB1 in a calcium-dependent manner. Interacts with METTL23. Interacts with IL1B; the interaction facilitates cargo translocation into the ERGIC. Interacts with EIF2AK3. In terms of processing, phosphorylated by CK2. Post-translationally, N-glycosylated cotranslationally at Asn-217 by STT3A-containing OST-A complex: this glycosylation is constitutive. In response to various stress, 5 additional facultative sites (Asn-62, Asn-107, Asn-445, Asn-481 and Asn-502) can be glycosylated post-translationally by STT3B-containing OST-B complex, leading to a hyperglycosylated form that is degraded by the ER-associated degradation (ERAD) pathway. In normal conditions, the OST-A complex together with CCDC134 prevent glycosylation at facultative sites during protein folding, thereby preventing hyperglycosylation. Mechanistically, nascent HSP90B1 is tethered during translation to a specialized CCDC134-containing translocon that forms a microenvironment for its folding, in which STT3A associates with the SRT pseudosubstrate motif, and prevents access to facultative glycosylation sites until folding is completed, rendering its facultative sites inaccessible to the OST-B complex.

It is found in the endoplasmic reticulum lumen. Its subcellular location is the sarcoplasmic reticulum lumen. The protein resides in the melanosome. The catalysed reaction is ATP + H2O = ADP + phosphate + H(+). Functionally, ATP-dependent chaperone involved in the processing of proteins in the endoplasmic reticulum, regulating their transport. Together with MESD, acts as a modulator of the Wnt pathway by promoting the folding of LRP6, a coreceptor of the canonical Wnt pathway. When associated with CNPY3, required for proper folding of Toll-like receptors. Promotes folding and trafficking of TLR4 to the cell surface. May participate in the unfolding of cytosolic leaderless cargos (lacking the secretion signal sequence) such as the interleukin 1/IL-1 to facilitate their translocation into the ERGIC (endoplasmic reticulum-Golgi intermediate compartment) and secretion; the translocation process is mediated by the cargo receptor TMED10. The sequence is that of Endoplasmin (HSP90B1) from Sus scrofa (Pig).